A 143-amino-acid polypeptide reads, in one-letter code: UPF0179 protein PTO0851 (143 aa).

Belongs to the UPF0179 family.

The protein is UPF0179 protein PTO0851 of Picrophilus torridus (strain ATCC 700027 / DSM 9790 / JCM 10055 / NBRC 100828 / KAW 2/3).